A 679-amino-acid polypeptide reads, in one-letter code: WD repeat-containing protein 48 homolog (679 aa).

8 WD repeats span residues 26 to 65 (QHRN…NEKY), 71 to 110 (HHND…CMST), 113 to 152 (THRD…ALTA), 164 to 203 (GSKD…RSMK), 206 to 245 (GHTE…CIQT), 248 to 287 (VHKE…NKML), 290 to 329 (EEKA…RCVL), and 349 to 388 (KGGA…KKEE). A disordered region spans residues 594–615 (PSAGNANNSLQNSQSDANSEGS).

Belongs to the WD repeat WDR48 family. In terms of assembly, catalytic component of the Usp12-46 deubiquitylase complex consisting of Usp12-46, Wdr20 and Uaf1; regulatory subunit that, together wtih Wdr20, stabilizes Usp12-46. The Usp12-46 deubiquitylase complex associates with arr/arrow; the interaction leads to deubiquitination and stabilization of arr/arrow.

In terms of biological role, regulatory component of the Usp12-46 deubiquitylase complex. activates deubiquitination by increasing the catalytic turnover without increasing the affinity of deubiquitinating enzymes for the substrate. The complex deubiquitylates the wg/wingless-signaling receptor arr/arrow, which stabilizes the receptor and increases its concentration at the cell surface; this enhances the sensitivity of cells to wg/wingless-signal stimulation. This increases the amplitude and spatial range of the signaling response to the wg/wingless morphogen gradient, facilitating the precise concentration-dependent regulation of its target genes. Together with Wdr20 and Usp12-46 required for wg/wingless-mediated signaling in the wing imaginal disc and for wg/wingless-dependent regulation of intestinal stem cell proliferation. The sequence is that of WD repeat-containing protein 48 homolog from Drosophila mojavensis (Fruit fly).